A 236-amino-acid chain; its full sequence is DNA repair and recombination protein RadB (236 aa).

Belongs to the eukaryotic RecA-like protein family. RadB subfamily.

In terms of biological role, involved in DNA repair and in homologous recombination. May regulate the cleavage reactions of the branch-structured DNA. Has a very weak ATPase activity that is not stimulated by DNA. Binds DNA but does not promote DNA strands exchange. The sequence is that of DNA repair and recombination protein RadB from Halobacterium salinarum (strain ATCC 29341 / DSM 671 / R1).